Consider the following 343-residue polypeptide: Probable dual-specificity RNA methyltransferase RlmN (343 aa).

Glu92 (proton acceptor) is an active-site residue. Residues 98-328 enclose the Radical SAM core domain; that stretch reads YHHGLTACIS…TTVRREMGAD (231 aa). Cys105 and Cys333 are oxidised to a cystine. Positions 112, 116, and 119 each coordinate [4Fe-4S] cluster. S-adenosyl-L-methionine contacts are provided by residues 159 to 160, Ser191, 214 to 216, and Asn290; these read GE and SLH. Cys333 serves as the catalytic S-methylcysteine intermediate.

Belongs to the radical SAM superfamily. RlmN family. [4Fe-4S] cluster is required as a cofactor.

The protein resides in the cytoplasm. It carries out the reaction adenosine(2503) in 23S rRNA + 2 reduced [2Fe-2S]-[ferredoxin] + 2 S-adenosyl-L-methionine = 2-methyladenosine(2503) in 23S rRNA + 5'-deoxyadenosine + L-methionine + 2 oxidized [2Fe-2S]-[ferredoxin] + S-adenosyl-L-homocysteine. The catalysed reaction is adenosine(37) in tRNA + 2 reduced [2Fe-2S]-[ferredoxin] + 2 S-adenosyl-L-methionine = 2-methyladenosine(37) in tRNA + 5'-deoxyadenosine + L-methionine + 2 oxidized [2Fe-2S]-[ferredoxin] + S-adenosyl-L-homocysteine. Its function is as follows. Specifically methylates position 2 of adenine 2503 in 23S rRNA and position 2 of adenine 37 in tRNAs. This Alkaliphilus oremlandii (strain OhILAs) (Clostridium oremlandii (strain OhILAs)) protein is Probable dual-specificity RNA methyltransferase RlmN.